The chain runs to 337 residues: MQSIPIKNVGESRLVDPFQRQYYYLRLSITDQCNFRCTYCLPDGYQPEANKPSFLTLKEIIHLAQAFAEMGTEKIRLTGGEPTLRKDFISIAESIANIDGIRQLAVTTNGYRMAKDVADWKQAGITSINVSVDSLDPKMFHQITGINKFDDVMRGIDRAFEVGYNKVKVNSVLMKNLNDKEFEQFLAWVKHRPIQMRFIELMQTGEMDSFFDRYHLSGQILADKLLKNGWTLQHKSHTDGPAKVFTHPDYAGEIGLIMPYEKNFCASCNRLRVSAKGKLHLCLFGEEGIELRDLLQSHEQQAILQARIFAALQGKREHHYLHIGDTGVRNHLASIGG.

The 227-residue stretch at P17 to K243 folds into the Radical SAM core domain. R26 is a GTP binding site. [4Fe-4S] cluster-binding residues include C33 and C37. Y39 provides a ligand contact to S-adenosyl-L-methionine. C40 contributes to the [4Fe-4S] cluster binding site. Residue R76 participates in GTP binding. G80 contributes to the S-adenosyl-L-methionine binding site. GTP is bound at residue T107. S131 contacts S-adenosyl-L-methionine. Position 168 (K168) interacts with GTP. M202 serves as a coordination point for S-adenosyl-L-methionine. [4Fe-4S] cluster-binding residues include C265 and C268. R270–R272 is a binding site for GTP. [4Fe-4S] cluster is bound at residue C282.

It belongs to the radical SAM superfamily. MoaA family. As to quaternary structure, monomer and homodimer. [4Fe-4S] cluster is required as a cofactor.

The enzyme catalyses GTP + AH2 + S-adenosyl-L-methionine = (8S)-3',8-cyclo-7,8-dihydroguanosine 5'-triphosphate + 5'-deoxyadenosine + L-methionine + A + H(+). It participates in cofactor biosynthesis; molybdopterin biosynthesis. Functionally, catalyzes the cyclization of GTP to (8S)-3',8-cyclo-7,8-dihydroguanosine 5'-triphosphate. The protein is GTP 3',8-cyclase of Haemophilus influenzae (strain 86-028NP).